A 260-amino-acid polypeptide reads, in one-letter code: Large ribosomal subunit protein uL4 (260 aa).

This sequence belongs to the universal ribosomal protein uL4 family. Part of the 50S ribosomal subunit.

In terms of biological role, one of the primary rRNA binding proteins, this protein initially binds near the 5'-end of the 23S rRNA. It is important during the early stages of 50S assembly. It makes multiple contacts with different domains of the 23S rRNA in the assembled 50S subunit and ribosome. Its function is as follows. Forms part of the polypeptide exit tunnel. This Methanopyrus kandleri (strain AV19 / DSM 6324 / JCM 9639 / NBRC 100938) protein is Large ribosomal subunit protein uL4.